Here is a 124-residue protein sequence, read N- to C-terminus: Large ribosomal subunit protein bL12 (124 aa).

This sequence belongs to the bacterial ribosomal protein bL12 family. As to quaternary structure, homodimer. Part of the ribosomal stalk of the 50S ribosomal subunit. Forms a multimeric L10(L12)X complex, where L10 forms an elongated spine to which 2 to 4 L12 dimers bind in a sequential fashion. Binds GTP-bound translation factors.

Forms part of the ribosomal stalk which helps the ribosome interact with GTP-bound translation factors. Is thus essential for accurate translation. The polypeptide is Large ribosomal subunit protein bL12 (Leptothrix cholodnii (strain ATCC 51168 / LMG 8142 / SP-6) (Leptothrix discophora (strain SP-6))).